Reading from the N-terminus, the 96-residue chain is Glutamyl-tRNA(Gln) amidotransferase subunit C (96 aa).

The protein belongs to the GatC family. Heterotrimer of A, B and C subunits.

It catalyses the reaction L-glutamyl-tRNA(Gln) + L-glutamine + ATP + H2O = L-glutaminyl-tRNA(Gln) + L-glutamate + ADP + phosphate + H(+). The catalysed reaction is L-aspartyl-tRNA(Asn) + L-glutamine + ATP + H2O = L-asparaginyl-tRNA(Asn) + L-glutamate + ADP + phosphate + 2 H(+). Allows the formation of correctly charged Asn-tRNA(Asn) or Gln-tRNA(Gln) through the transamidation of misacylated Asp-tRNA(Asn) or Glu-tRNA(Gln) in organisms which lack either or both of asparaginyl-tRNA or glutaminyl-tRNA synthetases. The reaction takes place in the presence of glutamine and ATP through an activated phospho-Asp-tRNA(Asn) or phospho-Glu-tRNA(Gln). The chain is Glutamyl-tRNA(Gln) amidotransferase subunit C from Neisseria meningitidis serogroup A / serotype 4A (strain DSM 15465 / Z2491).